Reading from the N-terminus, the 574-residue chain is Phospholipase B-like protein A (574 aa).

An N-terminal signal peptide occupies residues 1 to 20 (MRVIRSLLLLTIAIIGSVLS). N-linked (GlcNAc...) asparagine glycosylation is found at Asn-159, Asn-195, and Asn-415.

This sequence belongs to the phospholipase B-like family.

It localises to the secreted. Its function is as follows. Phospholipase that removes both fatty-acid chains from phosphatidylcholine and produces the water-soluble glycerophosphorylcholine. In addition to phosphatidylcholine deacylation, it also hydrolyzes phosphatidylinositol and phosphatidylethanolamine. The sequence is that of Phospholipase B-like protein A (plbA) from Dictyostelium discoideum (Social amoeba).